A 103-amino-acid polypeptide reads, in one-letter code: Large ribosomal subunit protein uL24 (103 aa).

This sequence belongs to the universal ribosomal protein uL24 family. As to quaternary structure, part of the 50S ribosomal subunit.

Functionally, one of two assembly initiator proteins, it binds directly to the 5'-end of the 23S rRNA, where it nucleates assembly of the 50S subunit. One of the proteins that surrounds the polypeptide exit tunnel on the outside of the subunit. This Haemophilus influenzae (strain ATCC 51907 / DSM 11121 / KW20 / Rd) protein is Large ribosomal subunit protein uL24.